The primary structure comprises 263 residues: 4-hydroxy-tetrahydrodipicolinate reductase (263 aa).

Residues 7–12, 96–98, and 122–125 contribute to the NAD(+) site; these read GFKGRM, GTT, and APNF. Catalysis depends on His-152, which acts as the Proton donor/acceptor. His-153 is a binding site for (S)-2,3,4,5-tetrahydrodipicolinate. The Proton donor role is filled by Lys-156. 162 to 163 contacts (S)-2,3,4,5-tetrahydrodipicolinate; the sequence is GT.

It belongs to the DapB family.

It localises to the cytoplasm. It carries out the reaction (S)-2,3,4,5-tetrahydrodipicolinate + NAD(+) + H2O = (2S,4S)-4-hydroxy-2,3,4,5-tetrahydrodipicolinate + NADH + H(+). The catalysed reaction is (S)-2,3,4,5-tetrahydrodipicolinate + NADP(+) + H2O = (2S,4S)-4-hydroxy-2,3,4,5-tetrahydrodipicolinate + NADPH + H(+). It participates in amino-acid biosynthesis; L-lysine biosynthesis via DAP pathway; (S)-tetrahydrodipicolinate from L-aspartate: step 4/4. In terms of biological role, catalyzes the conversion of 4-hydroxy-tetrahydrodipicolinate (HTPA) to tetrahydrodipicolinate. This chain is 4-hydroxy-tetrahydrodipicolinate reductase, found in Listeria monocytogenes serotype 4b (strain F2365).